Here is a 1230-residue protein sequence, read N- to C-terminus: Cullin-associated NEDD8-dissociated protein 1 (1230 aa).

At Ala-2 the chain carries N-acetylalanine. HEAT repeat units follow at residues 2 to 39 (ASAS…KDSI), 44 to 81 (DSER…KVKE), 83 to 119 (QVET…ELPP), 131 to 165 (CKKI…LSRQ), 171 to 208 (NFHP…SCGN), 210 to 247 (VFVG…QAGH), 248 to 282 (RIGE…FESF), 289 to 366 (EVYP…TRHE), 370 to 407 (EFYK…QTRP), 424 to 467 (PLTM…VLPG), 471 to 510 (QHIP…NHSP), and 515 to 552 (PHVQ…VIRP). Lys-55 carries the post-translational modification N6-acetyllysine. Residues 315–343 (DEDEDENAMDADGGDDDDQGSDDEYSDDG) form a disordered region. The residue at position 335 (Ser-335) is a Phosphoserine. Residue Ser-558 is modified to Phosphoserine. HEAT repeat units follow at residues 563 to 602 (PYIK…NLGD), 606 to 643 (SDLP…LKID), 646 to 683 (PVLG…NYSD), 688 to 725 (AMID…VYPS), 729 to 768 (KISG…TGTN), 770 to 808 (LGYM…ALTR), 809 to 845 (ACPK…LGEV), 852 to 889 (SGQL…GNLP), 890 to 927 (EYLP…GLKP), 928 to 960 (YVEN…KLTL), 961 to 998 (IDPE…DHPQ), 1002 to 1039 (PLLK…NKPS), 1043 to 1097 (DLLD…DSCL), 1099 to 1133 (RLDI…LSTL), and 1140 to 1189 (QRLD…IPEA). Lys-971 is modified (N6-acetyllysine).

This sequence belongs to the CAND family. In terms of assembly, interacts with TBP. Part of a complex that contains CUL1 and RBX1. Interacts with unneddylated cullins: interacts with CUL1, CUL2, CUL3, CUL4A, CUL4B and CUL5. Does not bind neddylated CUL1. Interaction with cullins is abolished in presence of COMMD1, which antagonizes with CAND1 for interacting with cullins. Interacts with ERCC6. Interacts with DCUN1D1, DCUN1D2, DCUN1D3, DCUN1D4 and DCUN1D5; these interactions are bridged by cullins and strongly inhibits the neddylation of cullins.

It localises to the cytoplasm. Its subcellular location is the nucleus. Functionally, key assembly factor of SCF (SKP1-CUL1-F-box protein) E3 ubiquitin ligase complexes that promotes the exchange of the substrate-recognition F-box subunit in SCF complexes, thereby playing a key role in the cellular repertoire of SCF complexes. Acts as a F-box protein exchange factor. The exchange activity of CAND1 is coupled with cycles of neddylation conjugation: in the deneddylated state, cullin-binding CAND1 binds CUL1-RBX1, increasing dissociation of the SCF complex and promoting exchange of the F-box protein. Probably plays a similar role in other cullin-RING E3 ubiquitin ligase complexes. This is Cullin-associated NEDD8-dissociated protein 1 (CAND1) from Pongo abelii (Sumatran orangutan).